An 884-amino-acid chain; its full sequence is Alanine--tRNA ligase (884 aa).

Zn(2+) is bound by residues His-562, His-566, Cys-676, and His-680.

Belongs to the class-II aminoacyl-tRNA synthetase family. It depends on Zn(2+) as a cofactor.

The protein resides in the cytoplasm. It carries out the reaction tRNA(Ala) + L-alanine + ATP = L-alanyl-tRNA(Ala) + AMP + diphosphate. Catalyzes the attachment of alanine to tRNA(Ala) in a two-step reaction: alanine is first activated by ATP to form Ala-AMP and then transferred to the acceptor end of tRNA(Ala). Also edits incorrectly charged Ser-tRNA(Ala) and Gly-tRNA(Ala) via its editing domain. The sequence is that of Alanine--tRNA ligase from Jannaschia sp. (strain CCS1).